The chain runs to 179 residues: ATP synthase subunit b (179 aa).

The chain crosses the membrane as a helical span at residues 23-43 (IVVGLVAFGLLAFVLMKFVFP).

This sequence belongs to the ATPase B chain family. As to quaternary structure, F-type ATPases have 2 components, F(1) - the catalytic core - and F(0) - the membrane proton channel. F(1) has five subunits: alpha(3), beta(3), gamma(1), delta(1), epsilon(1). F(0) has three main subunits: a(1), b(2) and c(10-14). The alpha and beta chains form an alternating ring which encloses part of the gamma chain. F(1) is attached to F(0) by a central stalk formed by the gamma and epsilon chains, while a peripheral stalk is formed by the delta and b chains.

The protein localises to the cell membrane. In terms of biological role, f(1)F(0) ATP synthase produces ATP from ADP in the presence of a proton or sodium gradient. F-type ATPases consist of two structural domains, F(1) containing the extramembraneous catalytic core and F(0) containing the membrane proton channel, linked together by a central stalk and a peripheral stalk. During catalysis, ATP synthesis in the catalytic domain of F(1) is coupled via a rotary mechanism of the central stalk subunits to proton translocation. Its function is as follows. Component of the F(0) channel, it forms part of the peripheral stalk, linking F(1) to F(0). This is ATP synthase subunit b from Salinispora arenicola (strain CNS-205).